Consider the following 179-residue polypeptide: Orotate phosphoribosyltransferase (179 aa).

Residues Arg-24, Arg-89, Lys-90, Lys-93, and 115–123 (EDVITTGGA) contribute to the 5-phospho-alpha-D-ribose 1-diphosphate site. 2 residues coordinate orotate: Thr-119 and Arg-147.

Belongs to the purine/pyrimidine phosphoribosyltransferase family. PyrE subfamily. Homodimer. Requires Mg(2+) as cofactor.

It carries out the reaction orotidine 5'-phosphate + diphosphate = orotate + 5-phospho-alpha-D-ribose 1-diphosphate. It functions in the pathway pyrimidine metabolism; UMP biosynthesis via de novo pathway; UMP from orotate: step 1/2. In terms of biological role, catalyzes the transfer of a ribosyl phosphate group from 5-phosphoribose 1-diphosphate to orotate, leading to the formation of orotidine monophosphate (OMP). This is Orotate phosphoribosyltransferase from Nocardioides sp. (strain ATCC BAA-499 / JS614).